We begin with the raw amino-acid sequence, 267 residues long: MKKILLTNDDGYHAKGIKALEQALEEMAEIYVVAPKHEKSACSQCITITAPLRAEKIKGKEGRHYRIDDGTPSDCVYLAINELFKHVCFDLVISGINLGSNMGEDTIYSGTVAGAIEGTIQGVPSIAISQILSNKNKNTPLSFDLAQKIIQDLVQNIFTNGYPLKGRKLLNVNVPNCSLQEYKGERITPKGYRLYKKEVHKRTDPKNESYFWLGLHPLEWQKRENEDRLSDFDAIASNHVSITPLNLDLTSYDDLKSLESWHEGMLK.

Positions 9, 10, 40, and 97 each coordinate a divalent metal cation.

It belongs to the SurE nucleotidase family. Requires a divalent metal cation as cofactor.

The protein localises to the cytoplasm. The enzyme catalyses a ribonucleoside 5'-phosphate + H2O = a ribonucleoside + phosphate. Its function is as follows. Nucleotidase that shows phosphatase activity on nucleoside 5'-monophosphates. The sequence is that of 5'-nucleotidase SurE from Helicobacter pylori (strain P12).